The sequence spans 232 residues: Clarin-1 (232 aa).

Residues 8 to 28 (IIFCMAGVFSFACALGVVTAL) traverse the membrane as a helical segment. An N-linked (GlcNAc...) asparagine glycan is attached at asparagine 48. Helical transmembrane passes span 101–121 (IILF…FFMY) and 135–155 (LGLY…MILF). The N-linked (GlcNAc...) asparagine glycan is linked to asparagine 184. Residues 186-206 (TTSFWVVFICFFVHFLNGLLI) form a helical membrane-spanning segment.

It belongs to the clarin family.

It is found in the cell membrane. Its function is as follows. May have a role in the excitatory ribbon synapse junctions between hair cells and cochlear ganglion cells and presumably also in analogous synapses within the retina. This chain is Clarin-1 (Clrn1), found in Rattus norvegicus (Rat).